A 79-amino-acid chain; its full sequence is Mipartoxin-3 (79 aa).

The N-terminal stretch at 1–21 (MKTLLLTLVVVTIVCLDLGNS) is a signal peptide. Intrachain disulfides connect Cys-24–Cys-41, Cys-34–Cys-59, Cys-63–Cys-71, and Cys-72–Cys-77.

The protein belongs to the three-finger toxin family. Short-chain subfamily. As to expression, expressed by the venom gland.

It localises to the secreted. In terms of biological role, snake venom neurotoxin that blocks neuromuscular transmission, presenting a postsynaptic action through the nicotinic acetylcholine receptor (nAChR). Has no cytotoxic activity. In Micrurus mipartitus (Red-tailed coral snake), this protein is Mipartoxin-3.